The primary structure comprises 253 residues: Triosephosphate isomerase (253 aa).

Substrate is bound at residue 9 to 11 (NWK). H95 acts as the Electrophile in catalysis. The active-site Proton acceptor is E167. Substrate is bound by residues G173, S213, and 234-235 (GG). A Phosphoserine modification is found at S213.

This sequence belongs to the triosephosphate isomerase family. As to quaternary structure, homodimer.

The protein resides in the cytoplasm. The catalysed reaction is D-glyceraldehyde 3-phosphate = dihydroxyacetone phosphate. It functions in the pathway carbohydrate biosynthesis; gluconeogenesis. Its pathway is carbohydrate degradation; glycolysis; D-glyceraldehyde 3-phosphate from glycerone phosphate: step 1/1. Functionally, involved in the gluconeogenesis. Catalyzes stereospecifically the conversion of dihydroxyacetone phosphate (DHAP) to D-glyceraldehyde-3-phosphate (G3P). In Bacillus pumilus (strain SAFR-032), this protein is Triosephosphate isomerase.